Reading from the N-terminus, the 578-residue chain is Telomere repeat-binding protein 1 (578 aa).

A Ubiquitin-like domain is found at 293–372 (VKLRIKSFRV…HLDSLDFSLE (80 aa)). The segment at 440–467 (ELSSQSQPPSRKSRRSEQQQQQAAQRRI) is disordered. Residues 463 to 522 (AQRRIRRPFSVAEVEALVQAVEKLGTGRWRDVKLCAFEDADHRTYVDLKDKWKTLVHTAK) enclose the HTH myb-type domain. Interaction with DNA regions lie at residues 465 to 469 (RRIRR), 511 to 515 (KDKWK), and 522 to 529 (KISPQQRR). The segment at residues 491-518 (WRDVKLCAFEDADHRTYVDLKDKWKTLV) is a DNA-binding region (H-T-H motif).

Homodimer and heterodimer with TRP2 and TRP3. Interacts with KU70. Expressed ubiquitously. Highest expression in flowers and leaves.

It localises to the nucleus. Binds specifically to the plant telomeric double-stranded DNA sequences 5'-GGTTTAG-3'. At least 4 repeats of telomeric sequences are required for binding. Induces DNA bending. The protein is Telomere repeat-binding protein 1 (TRP1) of Arabidopsis thaliana (Mouse-ear cress).